The chain runs to 434 residues: MTHNTDLNLPLFERAKALIPGGVNSPVRAFRAVGGTPRFITRAQGAYMWDANGQRFIDYIGSWGPMILGHGHPAVLEAVQKAALEGFSFGAPTEREVELAEEIIRHVPSMEMIRLVSSGTEAGMSAIRLARGATRRNKIIKFNGCYHGHADSLLVKAGSGLATFGHATSAGVPQEVVQHTLVLEYNDVAQLEEAFTLHGPDVACVIMEPIAGNMNFVRASVPFMRRARELCTQHGALLVIDEVMTGFRVALGGAQSLYAQAIPGFKPDITVLGKVIGGGMPLAAFGGSRAVMEQLAPLGPVYQAGTLSGNPVATACGLATLREIAKPGFYDALGARTRALIDGLAGAASAAGVPFCGDTQGGMFGFFLLPQLPQNYPEVLNTDGMRFNTLFHGLLDGGVYIAPALYEAGFVSAAHTEQDIADTVAVARDVFQKL.

K274 carries the post-translational modification N6-(pyridoxal phosphate)lysine.

It belongs to the class-III pyridoxal-phosphate-dependent aminotransferase family. HemL subfamily. As to quaternary structure, homodimer. Pyridoxal 5'-phosphate serves as cofactor.

The protein localises to the cytoplasm. The enzyme catalyses (S)-4-amino-5-oxopentanoate = 5-aminolevulinate. It participates in porphyrin-containing compound metabolism; protoporphyrin-IX biosynthesis; 5-aminolevulinate from L-glutamyl-tRNA(Glu): step 2/2. The protein is Glutamate-1-semialdehyde 2,1-aminomutase of Acidovorax ebreus (strain TPSY) (Diaphorobacter sp. (strain TPSY)).